The following is a 495-amino-acid chain: Oxidoreductase AflY (495 aa).

The interval 1-22 is disordered; it reads MGSHAPAVAGKPDPKKGPYQAT.

It belongs to the questin oxidase family.

Its pathway is mycotoxin biosynthesis; aflatoxin biosynthesis. In terms of biological role, oxidoreductase; part of the gene cluster that mediates the biosynthesis of aflatoxins, a group of polyketide-derived furanocoumarins, and part of the most toxic and carcinogenic compounds among the known mycotoxins. The four major aflatoxins produced by A.parasiticus are aflatoxin B1 (AFB1), aflatoxin B2 (AFB2), aflatoxin G1 (AFG1) and aflatoxin G2 (AFG2). Within the aflatoxin pathway, the oxidoreductase aflY seems to be involved in the conversion of versicolorin A (VERA) to demethylsterigmatocystin (DMST), through probable Baeyer-Villiger oxidation required for the formation of the xanthone ring. The biosynthesis of aflatoxins begins with the norsolorinic acid synthase aflC that combines a hexanoyl starter unit produced by the fatty acid synthase aflA/aflB and 7 malonyl-CoA extender units to synthesize the precursor NOR. The second step is the conversion of NOR to averantin and requires the norsolorinic acid ketoreductase aflD, which catalyzes the dehydration of norsolorinic acid to form (1'S)-averantin. The norsolorinic acid reductases aflE and aflF may also play a role in the conversion of NOR to AVN. The cytochrome P450 monooxygenase aflG then catalyzes the hydroxylation of AVN to 5'hydroxyaverantin (HAVN). The next step is performed by the 5'-hydroxyaverantin dehydrogenase aflH that transforms HAVN to 5'-oxoaverantin (OAVN) which is further converted to averufin (AVF) by aflK that plays a dual role in the pathway, as a 5'-oxoaverantin cyclase that mediates conversion of 5'-oxoaverantin, as well as a versicolorin B synthase in a later step in the pathway. The averufin oxidase aflI catalyzes the conversion of AVF to versiconal hemiacetal acetate (VHA). VHA is then the substrate for the versiconal hemiacetal acetate esterase aflJ to yield versiconal (VAL). Versicolorin B synthase aflK then converts VAL to versicolorin B (VERB) by closing the bisfuran ring of aflatoxin which is required for DNA-binding, thus giving to aflatoxin its activity as a mutagen. Then, the activity of the versicolorin B desaturase aflL leads to versicolorin A (VERA). A branch point starts from VERB since it can also be converted to dihydrodemethylsterigmatocystin (DMDHST), probably also by aflL, VERA being a precursor for aflatoxins B1 and G1, and DMDHST for aflatoxins B2 and G2. Next, the versicolorin reductase aflM and the cytochrome P450 monooxygenase aflN are involved in conversion of VERA to demethylsterigmatocystin (DMST). AflX and aflY seem also involved in this step, through probable aflX-mediated epoxide ring-opening step following versicolorin A oxidation and aflY-mediated Baeyer-Villiger oxidation required for the formation of the xanthone ring. The methyltransferase aflO then leads to the modification of DMST to sterigmatocystin (ST), and of DMDHST to dihydrosterigmatocystin (DHST). Both ST and DHST are then substrates of the O-methyltransferase aflP to yield O-methylsterigmatocystin (OMST) and dihydro-O-methylsterigmatocystin (DHOMST), respectively. Finally OMST is converted to aflatoxins B1 and G1, and DHOMST to aflatoxins B2 and G2, via the action of several enzymes including O-methylsterigmatocystin oxidoreductase aflQ, the cytochrome P450 monooxygenase aflU, but also the NADH-dependent flavin oxidoreductase nadA which is specifically required for the synthesis of AFG1. This is Oxidoreductase AflY from Aspergillus parasiticus (strain ATCC 56775 / NRRL 5862 / SRRC 143 / SU-1).